The following is a 563-amino-acid chain: Arginine--tRNA ligase (563 aa).

Positions 120–130 match the 'HIGH' region motif; sequence PNIAKPFHIGH.

The protein belongs to the class-I aminoacyl-tRNA synthetase family. In terms of assembly, monomer.

It is found in the cytoplasm. The catalysed reaction is tRNA(Arg) + L-arginine + ATP = L-arginyl-tRNA(Arg) + AMP + diphosphate. In Clostridium botulinum (strain Okra / Type B1), this protein is Arginine--tRNA ligase.